The sequence spans 556 residues: MAREKEMQEFTRSFFRGRPDLSTLTHSIVRRRYLAHSGRSHLEPEEKQALKRLVEEELLKMQVDEAASREDKLDLTKKGKRPPTPCSDPERKRFRFNSESESGSEASSPDYFGPPAKNGVAAEVSPAKEENPRRASKAVEESSDEERQRDLPAQRGEESSEEEEKGYKGKTRKKPVVKKQAPGKASVSRKQAREESEESEAEPVQRTAKKVEGNKGTKSLKESEQESEEEILAQKKEQREEEVEEEEKEEDEEKGDWKPRTRSNGRRKSAREERSCKQKSQAKRLLGDSDSEEEQKEAASSGDDSGRDREPPVQRKSEDRTQLKGGKRLSGSSEDEEDSGKGEPTAKGSRKMARLGSTSGEESDLEREVSDSEAGGGPQGERKNRSSKKSSRKGRTRSSSSSSDGSPEAKGGKAGSGRRGEDHPAVMRLKRYIRACGAHRNYKKLLGSCCSHKERLSILRAELEALGMKGTPSLGKCRALKEQREEAAEVASLDVANIISGSGRPRRRTAWNPLGEAAPPGELYRRTLDSDEERPRPAPPDWSHMRGIISSDGESN.

Residue serine 27 is modified to Phosphoserine. Basic and acidic residues predominate over residues 64 to 77; the sequence is DEAASREDKLDLTK. The segment at 64–426 is disordered; the sequence is DEAASREDKL…GRRGEDHPAV (363 aa). A Phosphothreonine modification is found at threonine 84. Serine 87, serine 98, serine 100, serine 125, serine 142, serine 143, serine 159, and serine 160 each carry phosphoserine. The segment covering 99 to 108 has biased composition (low complexity); it reads ESESGSEASS. A compositionally biased stretch (basic and acidic residues) spans 126–158; the sequence is PAKEENPRRASKAVEESSDEERQRDLPAQRGEE. Basic residues predominate over residues 168 to 177; that stretch reads KGKTRKKPVV. Phosphoserine occurs at positions 196, 199, 223, and 227. Basic and acidic residues predominate over residues 209–224; sequence KKVEGNKGTKSLKESE. The span at 240–254 shows a compositional bias: acidic residues; the sequence is EEEVEEEEKEEDEEK. Basic residues predominate over residues 260–269; the sequence is RTRSNGRRKS. Serine 289 and serine 291 each carry phosphoserine. The span at 304-322 shows a compositional bias: basic and acidic residues; that stretch reads DSGRDREPPVQRKSEDRTQ. Residues serine 330, serine 332, serine 333, and serine 357 each carry the phosphoserine modification. Threonine 358 carries the phosphothreonine modification. A phosphoserine mark is found at serine 359, serine 363, serine 370, and serine 372. Positions 385 to 396 are enriched in basic residues; it reads RSSKKSSRKGRT. An interaction with the histone H2A-H2B complex region spans residues 403–527; the sequence is SDGSPEAKGG…APPGELYRRT (125 aa). At threonine 471 the chain carries Phosphothreonine. The segment at 502-556 is disordered; the sequence is SGRPRRRTAWNPLGEAAPPGELYRRTLDSDEERPRPAPPDWSHMRGIISSDGESN. Over residues 523–536 the composition is skewed to basic and acidic residues; the sequence is LYRRTLDSDEERPR. 4 positions are modified to phosphoserine: serine 530, serine 550, serine 551, and serine 555.

As to quaternary structure, interacts (via C-terminus) with histone H2A-H2B dimers; the interaction is direct. Interacts with HIRA. Interacts with CK2. In terms of processing, phosphorylated by CK2. Widely expressed. Isoform 1 is predominant in skeletal muscle. Isoform 2 is predominant in liver and heart.

Its subcellular location is the nucleus. Its function is as follows. Histone chaperone that carries a H2A-H2B histone complex and facilitates its deposition onto chromatin. This chain is HIRA-interacting protein 3 (HIRIP3), found in Homo sapiens (Human).